Reading from the N-terminus, the 326-residue chain is Aspartate carbamoyltransferase catalytic subunit (326 aa).

Carbamoyl phosphate contacts are provided by arginine 55 and threonine 56. Residue lysine 83 coordinates L-aspartate. Residues arginine 105, histidine 135, and glutamine 138 each coordinate carbamoyl phosphate. Positions 176 and 230 each coordinate L-aspartate. Carbamoyl phosphate is bound by residues glycine 271 and proline 272.

This sequence belongs to the aspartate/ornithine carbamoyltransferase superfamily. ATCase family. In terms of assembly, heterododecamer (2C3:3R2) of six catalytic PyrB chains organized as two trimers (C3), and six regulatory PyrI chains organized as three dimers (R2).

The catalysed reaction is carbamoyl phosphate + L-aspartate = N-carbamoyl-L-aspartate + phosphate + H(+). The protein operates within pyrimidine metabolism; UMP biosynthesis via de novo pathway; (S)-dihydroorotate from bicarbonate: step 2/3. Its function is as follows. Catalyzes the condensation of carbamoyl phosphate and aspartate to form carbamoyl aspartate and inorganic phosphate, the committed step in the de novo pyrimidine nucleotide biosynthesis pathway. This is Aspartate carbamoyltransferase catalytic subunit from Streptomyces coelicolor (strain ATCC BAA-471 / A3(2) / M145).